The sequence spans 726 residues: Tripartite terminase subunit 1 (726 aa).

Residues 189–217 form a C3H1-type zinc finger; that stretch reads CMKCYEELTLTPNQGKSLRRRLHGKFCNH. Residue 626 to 633 participates in ATP binding; the sequence is YNDVFGKR.

It belongs to the herpesviridae TRM1 protein family. In terms of assembly, associates with TRM2 and TRM3 to form the tripartite terminase complex. Interacts with portal protein.

It is found in the host nucleus. Component of the molecular motor that translocates viral genomic DNA in empty capsid during DNA packaging. Forms a tripartite terminase complex together with TRM2 and TRM3 in the host cytoplasm. Once the complex reaches the host nucleus, it interacts with the capsid portal vertex. This portal forms a ring in which genomic DNA is translocated into the capsid. TRM1 carries an endonuclease activity that plays an important role for the cleavage of concatemeric viral DNA into unit length genomes. The sequence is that of Tripartite terminase subunit 1 from Homo sapiens (Human).